A 144-amino-acid chain; its full sequence is Phosphomevalonate dehydratase small subunit (144 aa).

S65 functions as the Proton acceptor in the catalytic mechanism.

Belongs to the AcnX type II small subunit family. As to quaternary structure, heterodimer composed of a large subunit (PMDh-L) and a small subunit (PMDh-S).

It carries out the reaction (R)-5-phosphomevalonate = (2E)-3-methyl-5-phosphooxypent-2-enoate + H2O. It participates in isoprenoid biosynthesis; isopentenyl diphosphate biosynthesis via mevalonate pathway. Component of a hydro-lyase that catalyzes the dehydration of mevalonate 5-phosphate (MVA5P) to form trans-anhydromevalonate 5-phosphate (tAHMP). Involved in the archaeal mevalonate (MVA) pathway, which provides fundamental precursors for isoprenoid biosynthesis, such as isopentenyl diphosphate (IPP) and dimethylallyl diphosphate (DMAPP). The chain is Phosphomevalonate dehydratase small subunit from Methanosarcina mazei (strain ATCC BAA-159 / DSM 3647 / Goe1 / Go1 / JCM 11833 / OCM 88) (Methanosarcina frisia).